Here is an 891-residue protein sequence, read N- to C-terminus: von Willebrand factor A domain-containing protein 7 (891 aa).

The signal sequence occupies residues 1 to 28 (MLPVEVPLSHLGPPILLLLQLLLPPTSA). N-linked (GlcNAc...) asparagine glycosylation occurs at Asn55. The disordered stretch occupies residues 238-273 (PKPPGKCSHGGHFDQSSSQPPRGGINKDSTSPSFSP). A VWFA domain is found at 314-499 (ASSLSFVLDT…DVAAIVGESM (186 aa)).

In terms of tissue distribution, expressed at low level in many tissues.

It localises to the secreted. This is von Willebrand factor A domain-containing protein 7 (Vwa7) from Mus musculus (Mouse).